A 543-amino-acid chain; its full sequence is Adenosine deaminase 2 (543 aa).

A signal peptide spans 1 to 26; that stretch reads MFLKFKNIFFIVLTLSIVFNGLIVNS. The segment covering 31–54 has biased composition (low complexity); the sequence is INNKNNNNNNNNKDLSSSESGSSS. The disordered stretch occupies residues 31 to 58; the sequence is INNKNNNNNNNNKDLSSSESGSSSDINP. A glycan (N-linked (GlcNAc...) asparagine) is linked at Asn126. Zn(2+)-binding residues include His144 and His146. A glycan (N-linked (GlcNAc...) asparagine) is linked at Asn179. 232 to 239 serves as a coordination point for substrate; it reads WRKFDGIF. N-linked (GlcNAc...) asparagine glycans are attached at residues Asn309 and Asn326. Gly355 is a substrate binding site. His389 lines the Zn(2+) pocket. Glu392 (proton donor) is an active-site residue. Asn397 is a glycosylation site (N-linked (GlcNAc...) asparagine). The active-site Proton acceptor is the His414. Asp471 is a Zn(2+) binding site. Asp472 serves as a coordination point for substrate. Asn508 and Asn514 each carry an N-linked (GlcNAc...) asparagine glycan.

This sequence belongs to the metallo-dependent hydrolases superfamily. Adenosine and AMP deaminases family. ADGF subfamily. The cofactor is Zn(2+).

Its subcellular location is the secreted. The catalysed reaction is adenosine + H2O + H(+) = inosine + NH4(+). In terms of biological role, adenosine deaminase that may contribute to the degradation of extracellular adenosine, a signaling molecule that controls a variety of cellular responses. May play a role in the regulation of cell proliferation. The chain is Adenosine deaminase 2 from Dictyostelium discoideum (Social amoeba).